The sequence spans 860 residues: Leucine--tRNA ligase (860 aa).

A 'HIGH' region motif is present at residues 42–52 (PYPSGRLHMGH). Residues 619–623 (KMSKS) carry the 'KMSKS' region motif. An ATP-binding site is contributed by K622.

The protein belongs to the class-I aminoacyl-tRNA synthetase family.

It localises to the cytoplasm. It carries out the reaction tRNA(Leu) + L-leucine + ATP = L-leucyl-tRNA(Leu) + AMP + diphosphate. In Escherichia coli O157:H7, this protein is Leucine--tRNA ligase.